Reading from the N-terminus, the 468-residue chain is Glutamate--tRNA ligase 2 (468 aa).

The short motif at 9–19 (PSPTGHLHIGG) is the 'HIGH' region element. Positions 98, 100, 125, and 127 each coordinate Zn(2+). A 'KMSKS' region motif is present at residues 236–240 (RLSKR). Lys-239 lines the ATP pocket.

This sequence belongs to the class-I aminoacyl-tRNA synthetase family. Glutamate--tRNA ligase type 1 subfamily. In terms of assembly, monomer. The cofactor is Zn(2+).

Its subcellular location is the cytoplasm. The enzyme catalyses tRNA(Glu) + L-glutamate + ATP = L-glutamyl-tRNA(Glu) + AMP + diphosphate. Functionally, catalyzes the attachment of glutamate to tRNA(Glu) in a two-step reaction: glutamate is first activated by ATP to form Glu-AMP and then transferred to the acceptor end of tRNA(Glu). The protein is Glutamate--tRNA ligase 2 of Methylococcus capsulatus (strain ATCC 33009 / NCIMB 11132 / Bath).